Consider the following 392-residue polypeptide: Formate-dependent phosphoribosylglycinamide formyltransferase (392 aa).

N(1)-(5-phospho-beta-D-ribosyl)glycinamide-binding positions include 22 to 23 (EL) and Glu82. Residues Arg114, Lys155, 160-165 (SSGKGQ), 195-198 (EGLV), and Glu203 each bind ATP. An ATP-grasp domain is found at 119-308 (RLAAETLSLP…EFALHVRAFL (190 aa)). Residues Glu267 and Glu279 each contribute to the Mg(2+) site. N(1)-(5-phospho-beta-D-ribosyl)glycinamide-binding positions include Asp286, Lys355, and 362–363 (RR).

Belongs to the PurK/PurT family. As to quaternary structure, homodimer.

The catalysed reaction is N(1)-(5-phospho-beta-D-ribosyl)glycinamide + formate + ATP = N(2)-formyl-N(1)-(5-phospho-beta-D-ribosyl)glycinamide + ADP + phosphate + H(+). Its pathway is purine metabolism; IMP biosynthesis via de novo pathway; N(2)-formyl-N(1)-(5-phospho-D-ribosyl)glycinamide from N(1)-(5-phospho-D-ribosyl)glycinamide (formate route): step 1/1. In terms of biological role, involved in the de novo purine biosynthesis. Catalyzes the transfer of formate to 5-phospho-ribosyl-glycinamide (GAR), producing 5-phospho-ribosyl-N-formylglycinamide (FGAR). Formate is provided by PurU via hydrolysis of 10-formyl-tetrahydrofolate. This Sodalis glossinidius (strain morsitans) protein is Formate-dependent phosphoribosylglycinamide formyltransferase.